The following is a 715-amino-acid chain: MFSLSSTVQPQVTIPLSHLINAFHSPKNISVSVNTPVSQKQHRDTVPEHEAPSSEPVLNLRDLGLSELKIGQIDKMVENLLPGFYKDKRVSSCWHTSHISAQSFFENKYGHLDMFSTLRSSSLYRQHPKTLRSICSDLQYFPVFIQSRGFKTLKSRTRRLQSTSERLVEAQNIAPSFVKGFLLRDRGTDLESLDKLMKTKNIPEAHQDAFKTGFAEGFLKAQALTQKTNDSLRRTRLILFVLLLFGIYGLLKNPFLSVRFRTTTGLDSAVDPVQMKNVTFEHVKGVEEAKQELQEVVEFLKNPQKFTVLGGKLPKGILLVGPPGTGKTLLARAVAGEADVPFYYASGSEFDEMFVGVGASRIRNLFREAKANAPCVIFIDELDSVGGKRIESPMHPYSRQTINQLLAEMDGFKPNEGVIIIGATNFPEALDNALIRPGRFDMQVTVPRPDVKGRTEILKWYLNKIKFDKSVDPEIIARGTVGFSGAELENLVNQAALKAAVDGKEMVTMKELEFSKDKILMGPERRSVEIDNKNKTITAYHESGHAIIAYYTKDAMPINKATIMPRGPTLGHVSLLPENDRWNETRAQLLAQMDVSMGGRVAEELIFGTDHITTGASSDFDNATKIAKRMVTKFGMSEKLGVMTYSDTGKLSPETQSAIEQEIRILLRESYERAKHILKTHAKEHKNLAEALLTYETLDAKEIQIVLEGKKLEVR.

At 1-237 the chain is on the mitochondrial matrix side; sequence MFSLSSTVQP…TNDSLRRTRL (237 aa). Residues 34–54 are disordered; that stretch reads NTPVSQKQHRDTVPEHEAPSS. The span at 41–52 shows a compositional bias: basic and acidic residues; the sequence is QHRDTVPEHEAP. The helical transmembrane segment at 238–258 threads the bilayer; that stretch reads ILFVLLLFGIYGLLKNPFLSV. The Mitochondrial intermembrane portion of the chain corresponds to 259 to 715; the sequence is RFRTTTGLDS…VLEGKKLEVR (457 aa). Residues V283, T325, G326, K327, T328, and L329 each contribute to the ATP site. Residue H541 participates in Zn(2+) binding. The active site involves E542. Zn(2+) is bound by residues H545 and D619.

It in the N-terminal section; belongs to the AAA ATPase family. In the C-terminal section; belongs to the peptidase M41 family. As to quaternary structure, homohexamer; may also form heterohexamers. Exists in several complexes of 600-1100 kDa. Interacts with AFG1L. Requires Zn(2+) as cofactor. Proteolytically processed by mitochondrial processing peptidase (MPP) to generate the mature form. Degraded in an OMA1-dependent manner in response to oxidative stress. As to expression, detected in heart and skeletal muscle (at protein level).

The protein localises to the mitochondrion inner membrane. It is found in the mitochondrion. It catalyses the reaction ATP + H2O = ADP + phosphate + H(+). In terms of biological role, ATP-dependent metalloprotease that catalyzes the degradation of folded and unfolded proteins with a suitable degron sequence in the mitochondrial intermembrane region. Plays an important role in regulating mitochondrial morphology and function by cleaving OPA1 at position S2, giving rise to a form of OPA1 that promotes maintenance of normal mitochondrial structure and mitochondrial protein metabolism. Ensures cell proliferation, maintains normal cristae morphology and complex I respiration activity, promotes antiapoptotic activity and protects mitochondria from the accumulation of oxidatively damaged membrane proteins. Required to control the accumulation of nonassembled respiratory chain subunits (NDUFB6, OX4 and ND1). Involved in the mitochondrial adaptation in response to various signals, such as stress or developmental cues, by mediating degradation of mitochondrial proteins to rewire the mitochondrial proteome. Catalyzes degradation of mitochondrial proteins, such as translocases, lipid transfer proteins and metabolic enzymes in response to nutrient starvation in order to limit mitochondrial biogenesis: mechanistically, YME1L is activated by decreased phosphatidylethanolamine levels caused by LPIN1 activity in response to mTORC1 inhibition. Acts as a regulator of adult neural stem cell self-renewal by promoting mitochondrial proteome rewiring, preserving neural stem and progenitor cells self-renewal. Required for normal, constitutive degradation of PRELID1. Catalyzes the degradation of OMA1 in response to membrane depolarization. Mediates degradation of TIMM17A downstream of the integrated stress response (ISR). Catalyzes degradation of MICU1 when MICU1 is not assembled via an interchain disulfide. The sequence is that of ATP-dependent zinc metalloprotease YME1L1 (Yme1l1) from Mus musculus (Mouse).